Reading from the N-terminus, the 335-residue chain is Glucokinase (335 aa).

ATP is bound at residue 11–16; it reads ADIGGT.

This sequence belongs to the bacterial glucokinase family.

The protein localises to the cytoplasm. The enzyme catalyses D-glucose + ATP = D-glucose 6-phosphate + ADP + H(+). The protein is Glucokinase of Stenotrophomonas maltophilia (strain R551-3).